The following is a 394-amino-acid chain: Obg-like ATPase 1 (394 aa).

The 265-residue stretch at 21–285 (LKAGIVGLAN…MSPEDAEEEL (265 aa)) folds into the OBG-type G domain. Residue 30 to 35 (NVGKST) coordinates ATP. Residues Ser-34 and Thr-55 each contribute to the Mg(2+) site. Phosphothreonine is present on Thr-89. A Glycyl lysine isopeptide (Lys-Gly) (interchain with G-Cter in ubiquitin) cross-link involves residue Lys-98. 2 positions are modified to phosphoserine: Ser-116 and Ser-119. Leu-233 lines the ATP pocket. The TGS domain occupies 306 to 389 (DLISFFTCGP…EDGDIIYFRA (84 aa)).

Belongs to the TRAFAC class OBG-HflX-like GTPase superfamily. OBG GTPase family. YchF/OLA1 subfamily. In terms of assembly, monomer. Interacts with the 26S proteasome subunit RPT6. It depends on Mg(2+) as a cofactor.

Its subcellular location is the cytoplasm. Its function is as follows. Hydrolyzes ATP, and can also hydrolyze GTP with lower efficiency. Has lower affinity for GTP. The polypeptide is Obg-like ATPase 1 (Saccharomyces cerevisiae (strain ATCC 204508 / S288c) (Baker's yeast)).